The sequence spans 164 residues: Protein PPLZ02 (164 aa).

The AP2/ERF DNA-binding region spans 7–64; that stretch reads RYRGFRQRHWGSWVSEIRHSILKTRIWQGTFESAEDAARAYDEAARLMCGTRARTNFP.

It localises to the nucleus. Functionally, essential for all lupin cells independent of the respective tissue. The sequence is that of Protein PPLZ02 (PPLZ02) from Lupinus polyphyllus (Large-leaved lupine).